A 601-amino-acid polypeptide reads, in one-letter code: Threonine dehydratase (601 aa).

The N-terminal 51 residues, 1-51 (MEVLCQAPAGNSNFACNPKFTAIRTRAISSNDTFKVISSTGNNKKMKGAIR), are a transit peptide targeting the chloroplast. ACT-like domains are found at residues 427 to 499 (ALLA…NLTN) and 521 to 592 (IFCQ…IESL).

It belongs to the serine/threonine dehydratase family. Requires pyridoxal 5'-phosphate as cofactor.

The protein localises to the plastid. It is found in the chloroplast. The enzyme catalyses L-threonine = 2-oxobutanoate + NH4(+). It functions in the pathway amino-acid biosynthesis; L-isoleucine biosynthesis; 2-oxobutanoate from L-threonine: step 1/1. In terms of biological role, catalyzes the conversion of threonine to alpha-keto butyrate in isoleucine (Ile) biosynthesis. Required for JA-Ile biosynthesis, a signaling molecule involved in defense and resistance to the herbivore Manduca sexta caterpillars. The protein is Threonine dehydratase of Nicotiana attenuata (Coyote tobacco).